We begin with the raw amino-acid sequence, 1432 residues long: MGARASILSGGKLDDWEKIRLRPGGKKKYRIKHLVWASRELDRFALNPGLLESAKGCQQILVQLQPALQTGTQEIKSLYNTVATLYCVHQRIEIKDTMEALEKIEEIQNKNKQQAQKAETDKKDNSQVSQNYPIVQNLQGQPVHQALSPRTLNAWVKVIEEKAFSPEVIPMFSALSEGATPQDLNTMLNTIGGHQAAMQMLKDTINEEAAEWDRVHPVHAGPIAPGQVREPRGSDIAGTTSTLQEQIGWMTGNPPIPVGEIYKRWIILGLNKIVRMYSPVSILDIRQGPKEPFRDYVDRFFKALRAEQATQDVKNWMTDTLLVQNANPDCKTILKALGSGATLEEMMTACQGVGGPGHKARVLAEAMSQVTNTNIMMQRGNFRDHKRIVKCFNCGKQGHIAKNCRAPRKKGCWKCGKEGHQMKDCTERQANFFREDLAFQQREARELSPEQTRANSPTSREPRARRGDPLPETGAEGQGTVSSNFPQITLWQRPLVTIRIGGQLREALLDTGADDTVLEDIDLPRKWKPKMIGGIGGFIKVRQYNEVPIEIEGKKAIGTVLIGPTPVNIIGRNMLTQLGCTLNFPISPIETVPVKLKPGMDGPKIKQWPLTEEKIKALTQICAEMEEEGKISRVGPENPYNTPVFAIKKKDSTKWRKLVDFRELNKRTQDFWEVQLGIPHPAGLKKKKSVTVLDVGDAYFSVPLYEDFRKYTAFTIPSINNETPGIRYQYNVLPQGWKGSPAIFQCSMTKILKPFRERNPEIVIYQYMDDLYVGSDLEIEQHRRKIKELREHLLKWGFTTPDKKHQKEPPFLWMGYELHPDKWTVQPIQLPEKEDWTVNDIQKLVGKLNWASQIYPGIKVKQLCKLLKGAKALTDIVPLTREAELELAENKEILKEPVHGVYYDSAKELIAEVQKQGLDQWTYQIYQEPFKNLKTGKYAKRRSAHTNDVKQLAEVVQKIALEAIVIWGKTPKFRLPIQRETWETWWTDYWQATWIPEWEFVNTPPLVKLWYQLEKEPIMGAETFYVDGASNRETKTGKAGYVTDKGRQKVVTLTDTTNQKTELHAIYLALRDSGLEVNIVTDSQYALGIIQAQPDKSESELVNQIIEELIKKEKVYLSWVPAHKGIGGNEQVDKLVSSGIRKVLFLDGIDKAQEDHEKYHSNWRAMASDFNLPPVVAKEIVASCDKCQLKGEAMHGQVDCSPGIWQLDCTHLEGKVILVAVHVASGYIEAEVIPAETGQEAAFFILKLAGRWPVKVIHTDNGSNFTSGAVKAACWWADIKQEFGIPYNPQSQGVVESMNKELKKIIGQVREQAEHLKTAVQMAVFIHNFKRKGGIGGYSAGERIIDIIATDIQTRELQKQITKIQNFRVYYRDSRDPIWKGPAKLPWKGEGAVVIQDNSEIKVVPRRKAKIIRDYGKQMAGDDCVAGRQDED.

Residue glycine 2 is the site of N-myristoyl glycine; by host attachment. Positions 7 to 31 are interaction with Gp41; sequence ILSGGKLDDWEKIRLRPGGKKKYRI. Residues 8 to 43 are interaction with host CALM1; it reads LSGGKLDDWEKIRLRPGGKKKYRIKHLVWASRELDR. Residues 12-19 are interaction with host AP3D1; sequence KLDDWEKI. Positions 14-33 are interaction with membrane phosphatidylinositol 4,5-bisphosphate and RNA; the sequence is DDWEKIRLRPGGKKKYRIKH. A Nuclear export signal motif is present at residues 16–22; it reads WEKIRLR. A Nuclear localization signal motif is present at residues 26–32; sequence KKKYRIK. An interaction with membrane phosphatidylinositol 4,5-bisphosphate region spans residues 73 to 77; that stretch reads QEIKS. Tyrosine 132 bears the Phosphotyrosine; by host mark. Residues 189–227 are interaction with human PPIA/CYPA and NUP153; that stretch reads NTIGGHQAAMQMLKDTINEEAAEWDRVHPVHAGPIAPGQ. Residues 277–363 are dimerization/Multimerization of capsid protein p24; sequence YSPVSILDIR…GGPGHKARVL (87 aa). CCHC-type zinc fingers lie at residues 389 to 406 and 410 to 427; these read VKCF…NCRA and KGCW…DCTE. The interval 443-483 is disordered; sequence EARELSPEQTRANSPTSREPRARRGDPLPETGAEGQGTVSS. Polar residues predominate over residues 449-459; sequence PEQTRANSPTS. Residues 460–469 are compositionally biased toward basic and acidic residues; it reads REPRARRGDP. The interval 486 to 490 is dimerization of protease; the sequence is PQITL. Residues 505–574 form the Peptidase A2 domain; it reads REALLDTGAD…TPVNIIGRNM (70 aa). Aspartate 510 (for protease activity; shared with dimeric partner) is an active-site residue. Dimerization of protease stretches follow at residues 534–540 and 573–585; these read GIGGFIK and NMLT…LNFP. The region spanning 628–818 is the Reverse transcriptase domain; the sequence is EGKISRVGPE…PPFLWMGYEL (191 aa). Mg(2+) is bound by residues aspartate 694, aspartate 769, and aspartate 770. The RT 'primer grip' stretch occupies residues 811–819; sequence FLWMGYELH. The Tryptophan repeat motif motif lies at 982–998; it reads WETWWTDYWQATWIPEW. Residues 1018–1141 enclose the RNase H type-1 domain; it reads IMGAETFYVD…VDKLVSSGIR (124 aa). 4 residues coordinate Mg(2+): aspartate 1027, glutamate 1062, aspartate 1082, and aspartate 1133. The Integrase-type zinc finger occupies 1147–1188; sequence DGIDKAQEDHEKYHSNWRAMASDFNLPPVVAKEIVASCDKCQ. Zn(2+)-binding residues include histidine 1156, histidine 1160, cysteine 1184, and cysteine 1187. One can recognise an Integrase catalytic domain in the interval 1198–1348; the sequence is VDCSPGIWQL…SAGERIIDII (151 aa). Aspartate 1208, aspartate 1260, and glutamate 1296 together coordinate Mg(2+). Residues 1367–1414 constitute a DNA-binding region (integrase-type); the sequence is FRVYYRDSRDPIWKGPAKLPWKGEGAVVIQDNSEIKVVPRRKAKIIRD.

Homotrimer; further assembles as hexamers of trimers. Interacts with gp41 (via C-terminus). Interacts with host CALM1; this interaction induces a conformational change in the Matrix protein, triggering exposure of the myristate group. Interacts with host AP3D1; this interaction allows the polyprotein trafficking to multivesicular bodies during virus assembly. Part of the pre-integration complex (PIC) which is composed of viral genome, matrix protein, Vpr and integrase. As to quaternary structure, homodimer; the homodimer further multimerizes as homohexamers or homopentamers. Interacts with human PPIA/CYPA; This interaction stabilizes the capsid. Interacts with human NUP153. Interacts with host PDZD8; this interaction stabilizes the capsid. Interacts with monkey TRIM5; this interaction destabilizes the capsid. In terms of assembly, homodimer, whose active site consists of two apposed aspartic acid residues. Heterodimer of p66 RT and p51 RT (RT p66/p51). Heterodimerization of RT is essential for DNA polymerase activity. The overall folding of the subdomains is similar in p66 RT and p51 RT but the spatial arrangements of the subdomains are dramatically different. As to quaternary structure, homotetramer; may further associate as a homohexadecamer. Part of the pre-integration complex (PIC) which is composed of viral genome, matrix protein, Vpr and integrase. Interacts with human SMARCB1/INI1 and human PSIP1/LEDGF isoform 1. Interacts with human KPNA3; this interaction might play a role in nuclear import of the pre-integration complex. Interacts with human NUP153; this interaction might play a role in nuclear import of the pre-integration complex. Mg(2+) is required as a cofactor. Post-translationally, specific enzymatic cleavages by the viral protease yield mature proteins. The protease is released by autocatalytic cleavage. The polyprotein is cleaved during and after budding, this process is termed maturation. Proteolytic cleavage of p66 RT removes the RNase H domain to yield the p51 RT subunit. Nucleocapsid protein p7 might be further cleaved after virus entry. Tyrosine phosphorylated presumably in the virion by a host kinase. Phosphorylation is apparently not a major regulator of membrane association. In terms of processing, phosphorylated possibly by host MAPK1; this phosphorylation is necessary for Pin1-mediated virion uncoating. Post-translationally, methylated by host PRMT6, impairing its function by reducing RNA annealing and the initiation of reverse transcription.

The protein resides in the host cell membrane. It is found in the host endosome. Its subcellular location is the host multivesicular body. It localises to the virion membrane. The protein localises to the host nucleus. The protein resides in the host cytoplasm. It is found in the virion. The catalysed reaction is Specific for a P1 residue that is hydrophobic, and P1' variable, but often Pro.. It catalyses the reaction Endohydrolysis of RNA in RNA/DNA hybrids. Three different cleavage modes: 1. sequence-specific internal cleavage of RNA. Human immunodeficiency virus type 1 and Moloney murine leukemia virus enzymes prefer to cleave the RNA strand one nucleotide away from the RNA-DNA junction. 2. RNA 5'-end directed cleavage 13-19 nucleotides from the RNA end. 3. DNA 3'-end directed cleavage 15-20 nucleotides away from the primer terminus.. The enzyme catalyses 3'-end directed exonucleolytic cleavage of viral RNA-DNA hybrid.. It carries out the reaction DNA(n) + a 2'-deoxyribonucleoside 5'-triphosphate = DNA(n+1) + diphosphate. With respect to regulation, protease: The viral protease is inhibited by many synthetic protease inhibitors (PIs), such as amprenavir, atazanavir, indinavir, loprinavir, nelfinavir, ritonavir and saquinavir. Use of protease inhibitors in tritherapy regimens permit more ambitious therapeutic strategies. Reverse transcriptase/ribonuclease H: RT can be inhibited either by nucleoside RT inhibitors (NRTIs) or by non nucleoside RT inhibitors (NNRTIs). NRTIs act as chain terminators, whereas NNRTIs inhibit DNA polymerization by binding a small hydrophobic pocket near the RT active site and inducing an allosteric change in this region. Classical NRTIs are abacavir, adefovir (PMEA), didanosine (ddI), lamivudine (3TC), stavudine (d4T), tenofovir (PMPA), zalcitabine (ddC), and zidovudine (AZT). Classical NNRTIs are atevirdine (BHAP U-87201E), delavirdine, efavirenz (DMP-266), emivirine (I-EBU), and nevirapine (BI-RG-587). The tritherapies used as a basic effective treatment of AIDS associate two NRTIs and one NNRTI. Functionally, mediates, with Gag polyprotein, the essential events in virion assembly, including binding the plasma membrane, making the protein-protein interactions necessary to create spherical particles, recruiting the viral Env proteins, and packaging the genomic RNA via direct interactions with the RNA packaging sequence (Psi). Gag-Pol polyprotein may regulate its own translation, by the binding genomic RNA in the 5'-UTR. At low concentration, the polyprotein would promote translation, whereas at high concentration, the polyprotein would encapsidate genomic RNA and then shut off translation. Targets the polyprotein to the plasma membrane via a multipartite membrane-binding signal, that includes its myristoylated N-terminus. Matrix protein is part of the pre-integration complex. Implicated in the release from host cell mediated by Vpu. Binds to RNA. Its function is as follows. Forms the conical core that encapsulates the genomic RNA-nucleocapsid complex in the virion. Most core are conical, with only 7% tubular. The core is constituted by capsid protein hexamer subunits. The core is disassembled soon after virion entry. Host restriction factors such as TRIM5-alpha or TRIMCyp bind retroviral capsids and cause premature capsid disassembly, leading to blocks in reverse transcription. Capsid restriction by TRIM5 is one of the factors which restricts HIV-1 to the human species. Host PIN1 apparently facilitates the virion uncoating. On the other hand, interactions with PDZD8 or CYPA stabilize the capsid. In terms of biological role, encapsulates and protects viral dimeric unspliced genomic RNA (gRNA). Binds these RNAs through its zinc fingers. Acts as a nucleic acid chaperone which is involved in rearangement of nucleic acid secondary structure during gRNA retrotranscription. Also facilitates template switch leading to recombination. As part of the polyprotein, participates in gRNA dimerization, packaging, tRNA incorporation and virion assembly. Functionally, aspartyl protease that mediates proteolytic cleavages of Gag and Gag-Pol polyproteins during or shortly after the release of the virion from the plasma membrane. Cleavages take place as an ordered, step-wise cascade to yield mature proteins. This process is called maturation. Displays maximal activity during the budding process just prior to particle release from the cell. Also cleaves Nef and Vif, probably concomitantly with viral structural proteins on maturation of virus particles. Hydrolyzes host EIF4GI and PABP1 in order to shut off the capped cellular mRNA translation. The resulting inhibition of cellular protein synthesis serves to ensure maximal viral gene expression and to evade host immune response. Also mediates cleavage of host YTHDF3. Mediates cleavage of host CARD8, thereby activating the CARD8 inflammasome, leading to the clearance of latent HIV-1 in patient CD4(+) T-cells after viral reactivation; in contrast, HIV-1 can evade CARD8-sensing when its protease remains inactive in infected cells prior to viral budding. Multifunctional enzyme that converts the viral RNA genome into dsDNA in the cytoplasm, shortly after virus entry into the cell. This enzyme displays a DNA polymerase activity that can copy either DNA or RNA templates, and a ribonuclease H (RNase H) activity that cleaves the RNA strand of RNA-DNA heteroduplexes in a partially processive 3' to 5' endonucleasic mode. Conversion of viral genomic RNA into dsDNA requires many steps. A tRNA(3)-Lys binds to the primer-binding site (PBS) situated at the 5'-end of the viral RNA. RT uses the 3' end of the tRNA primer to perform a short round of RNA-dependent minus-strand DNA synthesis. The reading proceeds through the U5 region and ends after the repeated (R) region which is present at both ends of viral RNA. The portion of the RNA-DNA heteroduplex is digested by the RNase H, resulting in a ssDNA product attached to the tRNA primer. This ssDNA/tRNA hybridizes with the identical R region situated at the 3' end of viral RNA. This template exchange, known as minus-strand DNA strong stop transfer, can be either intra- or intermolecular. RT uses the 3' end of this newly synthesized short ssDNA to perform the RNA-dependent minus-strand DNA synthesis of the whole template. RNase H digests the RNA template except for two polypurine tracts (PPTs) situated at the 5'-end and near the center of the genome. It is not clear if both polymerase and RNase H activities are simultaneous. RNase H probably can proceed both in a polymerase-dependent (RNA cut into small fragments by the same RT performing DNA synthesis) and a polymerase-independent mode (cleavage of remaining RNA fragments by free RTs). Secondly, RT performs DNA-directed plus-strand DNA synthesis using the PPTs that have not been removed by RNase H as primers. PPTs and tRNA primers are then removed by RNase H. The 3' and 5' ssDNA PBS regions hybridize to form a circular dsDNA intermediate. Strand displacement synthesis by RT to the PBS and PPT ends produces a blunt ended, linear dsDNA copy of the viral genome that includes long terminal repeats (LTRs) at both ends. Its function is as follows. Catalyzes viral DNA integration into the host chromosome, by performing a series of DNA cutting and joining reactions. This enzyme activity takes place after virion entry into a cell and reverse transcription of the RNA genome in dsDNA. The first step in the integration process is 3' processing. This step requires a complex comprising the viral genome, matrix protein, Vpr and integrase. This complex is called the pre-integration complex (PIC). The integrase protein removes 2 nucleotides from each 3' end of the viral DNA, leaving recessed CA OH's at the 3' ends. In the second step, the PIC enters cell nucleus. This process is mediated through integrase and Vpr proteins, and allows the virus to infect a non dividing cell. This ability to enter the nucleus is specific of lentiviruses, other retroviruses cannot and rely on cell division to access cell chromosomes. In the third step, termed strand transfer, the integrase protein joins the previously processed 3' ends to the 5' ends of strands of target cellular DNA at the site of integration. The 5'-ends are produced by integrase-catalyzed staggered cuts, 5 bp apart. A Y-shaped, gapped, recombination intermediate results, with the 5'-ends of the viral DNA strands and the 3' ends of target DNA strands remaining unjoined, flanking a gap of 5 bp. The last step is viral DNA integration into host chromosome. This involves host DNA repair synthesis in which the 5 bp gaps between the unjoined strands are filled in and then ligated. Since this process occurs at both cuts flanking the HIV genome, a 5 bp duplication of host DNA is produced at the ends of HIV-1 integration. Alternatively, Integrase may catalyze the excision of viral DNA just after strand transfer, this is termed disintegration. The polypeptide is Gag-Pol polyprotein (gag-pol) (Human immunodeficiency virus type 1 group M subtype J (isolate SE9280) (HIV-1)).